We begin with the raw amino-acid sequence, 417 residues long: Acetyltransferase cdmC (417 aa).

The N-linked (GlcNAc...) asparagine glycan is linked to Asn64. A run of 3 helical transmembrane segments spans residues 308 to 328 (IPDG…GYLV), 357 to 377 (GIFW…YPLL), and 389 to 409 (LVES…AFIL).

Belongs to the wax synthase family.

Its subcellular location is the membrane. The catalysed reaction is chrodrimanin A + acetyl-CoA = chrodrimanin B + CoA. Its pathway is secondary metabolite biosynthesis; terpenoid biosynthesis. Functionally, acetyltransferase; part of the gene cluster that mediates the biosynthesis of chrodrimanin B, a meroterpenoid that acts as a potent blocker of insect GABA-gated chloride channels. The first step of the pathway is the biosynthesis of 6-hydroxymellein by the polyketide synthase cdmE. The prenyltransferase cdmH acts as a 6-hydroxymellein 5-farnesyltransferase and produces the hydrophobic metabolite verruculide C. The FAD-dependent monooxygenase cdmI further converts verruculide C into verruculide B. The terpene cyclase cdmG then produced the pentacyclic molecule 3-hydroxypentacecilide A, the backbone structure of chrodrimanin B, via folding the farnesyl moiety of the substrate into the chair-boat conformation. The short-chain dehydrogenase/reductase cdmF functions as the 3-OH dehydrogenase that oxidizes the C-3 hydroxyl group of 3-hydroxypentacecilide A and produces chrodrimanin C, the dehydrogenated product of 3-hydroxypentacecilide A. The cytochrome P450 monooxygenase cdmJ then accepts both 3-hydroxypentacecilide A and chrodrimanin C and functions as a C-7-beta-hydroxylase to produce respectively chrodrimanin H and chrodrimanin F. The dioxygenase cdmA accepts chrodrimanin H to afford chrodrimanin E, which is further transformed to chrodrimanin A by the dioxygenase cdmD. CdmA can also accept chrodrimanin C as substrate to convert it into verruculide A, which is further converted into chrodrimanin T by cdmD. The last step of the biosynthesis is proposed to be performed by the acetyltransferase cdmC which acetylates chrodrimanin A to yield chrodrimanin B. The pathway may also lead to the production of additional shunt products, including chrodrimanins T and U. This is Acetyltransferase cdmC from Talaromyces verruculosus (Penicillium verruculosum).